The sequence spans 124 residues: Fluoride-specific ion channel FluC (124 aa).

The next 4 membrane-spanning stretches (helical) occupy residues 6-26, 34-54, 69-89, and 101-121; these read FAVA…ATWV, FYLA…YLYA, ALII…LDAL, and FAYV…GLAL. Na(+) is bound by residues Gly-76 and Thr-79.

It belongs to the fluoride channel Fluc/FEX (TC 1.A.43) family.

Its subcellular location is the cell inner membrane. It carries out the reaction fluoride(in) = fluoride(out). With respect to regulation, na(+) is not transported, but it plays an essential structural role and its presence is essential for fluoride channel function. In terms of biological role, fluoride-specific ion channel. Important for reducing fluoride concentration in the cell, thus reducing its toxicity. The polypeptide is Fluoride-specific ion channel FluC (Stutzerimonas stutzeri (strain A1501) (Pseudomonas stutzeri)).